The primary structure comprises 157 residues: Ubiquitin-like protein 4A (157 aa).

The Ubiquitin-like domain occupies 1 to 76 (MQLTVKALQG…LNLVVKPLEK (76 aa)). Residue lysine 48 forms a Glycyl lysine isopeptide (Lys-Gly) (interchain with G-Cter in ubiquitin) linkage. Position 90 is a phosphoserine (serine 90). The tract at residues 96 to 138 (WQLISKVLARHFSVADASRVLEQLQRDYDRSLSRLTLDDIERL) is required and sufficient for interaction with BAG6.

Component of the BAG6/BAT3 complex, at least composed of BAG6, UBL4A and GET4/TRC35. Interacts with BAG6; the interaction is direct and required for UBL4A protein stability. Interacts with USP13; may be indirect via BAG6. Post-translationally, polyubiquitinated. Ubiquitination by AMFR and deubiquitination by USP13 may regulate the interaction between the BAG6/BAT3 complex and SGTA and therefore may regulate client proteins fate.

Its subcellular location is the cytoplasm. The protein resides in the cytosol. It localises to the nucleus. Functionally, as part of a cytosolic protein quality control complex, the BAG6/BAT3 complex, maintains misfolded and hydrophobic patches-containing proteins in a soluble state and participates in their proper delivery to the endoplasmic reticulum or alternatively can promote their sorting to the proteasome where they undergo degradation. The BAG6/BAT3 complex is involved in the post-translational delivery of tail-anchored/type II transmembrane proteins to the endoplasmic reticulum membrane. Recruited to ribosomes, it interacts with the transmembrane region of newly synthesized tail-anchored proteins and together with SGTA and ASNA1 mediates their delivery to the endoplasmic reticulum. Client proteins that cannot be properly delivered to the endoplasmic reticulum are ubiquitinated and sorted to the proteasome. Similarly, the BAG6/BAT3 complex also functions as a sorting platform for proteins of the secretory pathway that are mislocalized to the cytosol either delivering them to the proteasome for degradation or to the endoplasmic reticulum. The BAG6/BAT3 complex also plays a role in the endoplasmic reticulum-associated degradation (ERAD), a quality control mechanism that eliminates unwanted proteins of the endoplasmic reticulum through their retrotranslocation to the cytosol and their targeting to the proteasome. It maintains these retrotranslocated proteins in an unfolded yet soluble state condition in the cytosol to ensure their proper delivery to the proteasome. This Mus musculus (Mouse) protein is Ubiquitin-like protein 4A.